Reading from the N-terminus, the 576-residue chain is Phosphoenolpyruvate-protein phosphotransferase (576 aa).

The active-site Tele-phosphohistidine intermediate is histidine 189. Phosphoenolpyruvate contacts are provided by arginine 296 and arginine 332. Residues glutamate 431 and aspartate 455 each contribute to the Mg(2+) site. Phosphoenolpyruvate-binding positions include 454-455 (ND) and arginine 465. Cysteine 502 functions as the Proton donor in the catalytic mechanism.

The protein belongs to the PEP-utilizing enzyme family. Homodimer. Mg(2+) is required as a cofactor.

The protein localises to the cytoplasm. The catalysed reaction is L-histidyl-[protein] + phosphoenolpyruvate = N(pros)-phospho-L-histidyl-[protein] + pyruvate. Its function is as follows. General (non sugar-specific) component of the phosphoenolpyruvate-dependent sugar phosphotransferase system (sugar PTS). This major carbohydrate active-transport system catalyzes the phosphorylation of incoming sugar substrates concomitantly with their translocation across the cell membrane. Enzyme I transfers the phosphoryl group from phosphoenolpyruvate (PEP) to the phosphoryl carrier protein (HPr). This is Phosphoenolpyruvate-protein phosphotransferase (ptsI) from Buchnera aphidicola subsp. Baizongia pistaciae (strain Bp).